The following is a 257-amino-acid chain: Protein vip1 (257 aa).

The RRM domain maps to 3 to 76 (NQVIVTNISP…NKIQITSEDG (74 aa)). The interval 74-99 (EDGGAASTTDQGGAGGDQAARQEDKP) is disordered. Positions 75–84 (DGGAASTTDQ) are enriched in low complexity. Residues S132 and S177 each carry the phosphoserine modification. A disordered region spans residues 217-257 (ARRLADAKNQAEGTASPASSTPTAPAEKEPTAPTTESKTTE). Position 230 is a phosphothreonine (T230). The span at 230–257 (TASPASSTPTAPAEKEPTAPTTESKTTE) shows a compositional bias: low complexity. 2 positions are modified to phosphoserine: S232 and S235.

This is Protein vip1 (vip1) from Schizosaccharomyces pombe (strain 972 / ATCC 24843) (Fission yeast).